A 496-amino-acid polypeptide reads, in one-letter code: Protein nucleotidyltransferase YdiU (496 aa).

The ATP site is built by Gly98, Gly100, Arg101, Lys116, Asp128, Gly129, Arg179, and Arg186. Asp259 functions as the Proton acceptor in the catalytic mechanism. Positions 260 and 269 each coordinate Mg(2+). Residue Asp269 participates in ATP binding.

This sequence belongs to the SELO family. The cofactor is Mg(2+). Requires Mn(2+) as cofactor.

The catalysed reaction is L-seryl-[protein] + ATP = 3-O-(5'-adenylyl)-L-seryl-[protein] + diphosphate. The enzyme catalyses L-threonyl-[protein] + ATP = 3-O-(5'-adenylyl)-L-threonyl-[protein] + diphosphate. It carries out the reaction L-tyrosyl-[protein] + ATP = O-(5'-adenylyl)-L-tyrosyl-[protein] + diphosphate. It catalyses the reaction L-histidyl-[protein] + UTP = N(tele)-(5'-uridylyl)-L-histidyl-[protein] + diphosphate. The catalysed reaction is L-seryl-[protein] + UTP = O-(5'-uridylyl)-L-seryl-[protein] + diphosphate. The enzyme catalyses L-tyrosyl-[protein] + UTP = O-(5'-uridylyl)-L-tyrosyl-[protein] + diphosphate. Its function is as follows. Nucleotidyltransferase involved in the post-translational modification of proteins. It can catalyze the addition of adenosine monophosphate (AMP) or uridine monophosphate (UMP) to a protein, resulting in modifications known as AMPylation and UMPylation. The chain is Protein nucleotidyltransferase YdiU from Albidiferax ferrireducens (strain ATCC BAA-621 / DSM 15236 / T118) (Rhodoferax ferrireducens).